Here is a 1093-residue protein sequence, read N- to C-terminus: Protein AF-17 (1093 aa).

The PHD-type 1 zinc-finger motif lies at 5–57 (VGGCCVCSDERGWAENPLVYCDGHACSVAVHQACYGIVQVPTGPWFCRKCESQ). A C2HC pre-PHD-type zinc finger spans residues 62–95 (RVRCELCPHKDGALKRTDNGGWAHVVCALYIPEV). A PHD-type 2 zinc finger spans residues 118–181 (KTCYICEEQG…KYCGYCKYHF (64 aa)). The interval 185–500 (KTSRHSSGGG…GGPAAPSLPS (316 aa)) is disordered. The span at 191–212 (SGGGGGGAGGGGGSMGGGGSGF) shows a compositional bias: gly residues. The span at 231–255 (PTHHERGQKKSRKDKERLKQKHKKR) shows a compositional bias: basic residues. Position 258 is a phosphoserine (S258). Residues 258–268 (SPPSILTPPVV) show a composition bias toward pro residues. Basic and acidic residues predominate over residues 282-300 (SHHEASTQETSESSRESKG). A compositionally biased stretch (basic residues) spans 301-316 (KKSSSHSLSHKGKKLS). Residues 317-340 (SGKGVSSFTSASSSSSSSSSSSGG) show a composition bias toward low complexity. The span at 345-354 (AVSSLQSSPD) shows a compositional bias: polar residues. A compositionally biased stretch (pro residues) spans 374–388 (APAPSAPPSPSAPEP). 2 positions are modified to phosphoserine: S378 and S423. Residues 410 to 425 (STTTSSSGRARAPSPG) show a composition bias toward low complexity. The residue at position 451 (T451) is a Phosphothreonine. The segment covering 465 to 484 (EKKHKASKRSRHGPGRPKGS) has biased composition (basic residues). Positions 729-764 (LQKENQRLQEQILSLTAKKERLQILNVQLSVPFPAL) are leucine-zipper. Disordered regions lie at residues 775-871 (VPGP…RAPG) and 1060-1093 (QTNP…QEKG). Low complexity predominate over residues 787-796 (SSDSLSTSKS). Positions 804-813 (GLDNSLSTSS) are enriched in polar residues. 2 stretches are compositionally biased toward low complexity: residues 818–832 (SGCP…SFHS) and 839–853 (LLQQ…ALPG).

Interacts with histone H3; interaction is necessary for MLLT6 binding to nucleosomes; interaction is inhibited by histone H3 'Lys-27' methylations (H3K27me1, H3K27me2 and H3K27me3).

The protein resides in the nucleus. In Homo sapiens (Human), this protein is Protein AF-17 (MLLT6).